A 159-amino-acid polypeptide reads, in one-letter code: Major latex protein 146 (159 aa).

It belongs to the MLP family. In terms of tissue distribution, laticifer.

It localises to the vacuole. The protein resides in the cytoplasmic vesicle. Its function is as follows. Not known; MLPs constitute up to 50% of the soluble latex protein. The sequence is that of Major latex protein 146 (MLP146) from Papaver somniferum (Opium poppy).